A 236-amino-acid chain; its full sequence is Small ribosomal subunit protein uS2c (236 aa).

This sequence belongs to the universal ribosomal protein uS2 family.

The protein localises to the plastid. Its subcellular location is the chloroplast. This chain is Small ribosomal subunit protein uS2c (rps2), found in Lemna minor (Common duckweed).